A 136-amino-acid chain; its full sequence is MARLFIAVIAIQGASKMHRTEVDLVPVGCVLDELSRIDGLPRDATAPILILDEAEPLHAADRLRAIGSLPWDVRACFGHGIGRKDAREMRDRLAANEAAIPIRSALARSARRAERGCRMPAHFRLITGSANSEFLT.

This chain is Nodulation protein K (nodK), found in Bradyrhizobium sp. (strain ANU 289).